The primary structure comprises 764 residues: Molybdenum cofactor sulfurase 1 (764 aa).

Lys228 is subject to N6-(pyridoxal phosphate)lysine. Residue Cys394 is part of the active site. The MOSC domain occupies 607–762; sequence LRLLKQSDEE…LYCNSVVEGL (156 aa).

This sequence belongs to the class-V pyridoxal-phosphate-dependent aminotransferase family. MOCOS subfamily. Pyridoxal 5'-phosphate serves as cofactor.

The catalysed reaction is Mo-molybdopterin + L-cysteine + AH2 = thio-Mo-molybdopterin + L-alanine + A + H2O. In terms of biological role, sulfurates the molybdenum cofactor. Sulfation of molybdenum is essential for xanthine dehydrogenase (XDH) and aldehyde oxidase (ADO) enzymes in which molybdenum cofactor is liganded by 1 oxygen and 1 sulfur atom in active form. This chain is Molybdenum cofactor sulfurase 1, found in Aedes aegypti (Yellowfever mosquito).